The sequence spans 335 residues: 2-acylglycerol O-acyltransferase 1 (335 aa).

The next 2 membrane-spanning stretches (helical) occupy residues 24–44 and 47–67; these read WVFS…CLVL and VWLL…TPQA. Residues Asn125 and Asn180 are each glycosylated (N-linked (GlcNAc...) asparagine).

This sequence belongs to the diacylglycerol acyltransferase family.

Its subcellular location is the endoplasmic reticulum membrane. It carries out the reaction a 2-acylglycerol + an acyl-CoA = a 1,2-diacylglycerol + CoA. The enzyme catalyses a 2-acylglycerol + an acyl-CoA = a 1,2-diacyl-sn-glycerol + CoA. The catalysed reaction is a 2-acylglycerol + an acyl-CoA = a 2,3-diacyl-sn-glycerol + CoA. It catalyses the reaction a 1-acylglycerol + an acyl-CoA = a 1,2-diacylglycerol + CoA. It carries out the reaction a 1-acylglycerol + an acyl-CoA = a 1,3-diacylglycerol + CoA. The enzyme catalyses a 1-acyl-sn-glycerol + an acyl-CoA = a 1,3-diacyl-sn-glycerol + CoA. The catalysed reaction is a 3-acyl-sn-glycerol + an acyl-CoA = a 1,3-diacyl-sn-glycerol + CoA. It functions in the pathway glycerolipid metabolism; triacylglycerol biosynthesis. Functionally, involved in glycerolipid synthesis and lipid metabolism. Catalyzes the formation of diacylglycerol, the precursor of triacylglycerol, by transferring the acyl chain of a fatty acyl-CoA to a monoacylglycerol, mainly at the sn-1 or sn-3 positions. It uses both sn-2-monoacylglycerol (2-acylglycerol) and sn-1-monoacylglycerol (1-acyl-sn-glycerol) equally well as substrates, and uses sn-3-monoacylglycerol (3-acyl-sn-glycerol) with lower efficiency. In Xenopus laevis (African clawed frog), this protein is 2-acylglycerol O-acyltransferase 1 (mogat1).